The primary structure comprises 278 residues: Tryptophan synthase alpha chain (278 aa).

Catalysis depends on proton acceptor residues Glu50 and Asp61.

It belongs to the TrpA family. Tetramer of two alpha and two beta chains.

It catalyses the reaction (1S,2R)-1-C-(indol-3-yl)glycerol 3-phosphate + L-serine = D-glyceraldehyde 3-phosphate + L-tryptophan + H2O. It participates in amino-acid biosynthesis; L-tryptophan biosynthesis; L-tryptophan from chorismate: step 5/5. The alpha subunit is responsible for the aldol cleavage of indoleglycerol phosphate to indole and glyceraldehyde 3-phosphate. The polypeptide is Tryptophan synthase alpha chain (Rhodopseudomonas palustris (strain BisB5)).